Reading from the N-terminus, the 55-residue chain is Small ribosomal subunit protein bS21 (55 aa).

This sequence belongs to the bacterial ribosomal protein bS21 family.

The protein is Small ribosomal subunit protein bS21 of Ureaplasma parvum serovar 3 (strain ATCC 27815 / 27 / NCTC 11736).